We begin with the raw amino-acid sequence, 716 residues long: DNA ligase (716 aa).

NAD(+) contacts are provided by residues 50-54 (DAEYD), 99-100 (SL), and E132. The active-site N6-AMP-lysine intermediate is K134. NAD(+) contacts are provided by R155, E192, K308, and K332. Zn(2+)-binding residues include C437, C439, C461, and C467. The BRCT domain maps to 638–716 (KSNSAVAGKT…EDEWLKLIGE (79 aa)).

Belongs to the NAD-dependent DNA ligase family. LigA subfamily. Mg(2+) serves as cofactor. Mn(2+) is required as a cofactor.

The catalysed reaction is NAD(+) + (deoxyribonucleotide)n-3'-hydroxyl + 5'-phospho-(deoxyribonucleotide)m = (deoxyribonucleotide)n+m + AMP + beta-nicotinamide D-nucleotide.. Its function is as follows. DNA ligase that catalyzes the formation of phosphodiester linkages between 5'-phosphoryl and 3'-hydroxyl groups in double-stranded DNA using NAD as a coenzyme and as the energy source for the reaction. It is essential for DNA replication and repair of damaged DNA. The sequence is that of DNA ligase from Bradyrhizobium diazoefficiens (strain JCM 10833 / BCRC 13528 / IAM 13628 / NBRC 14792 / USDA 110).